A 72-amino-acid polypeptide reads, in one-letter code: Potassium channel toxin epsilon-KTx 1.1 (72 aa).

An N-terminal signal peptide occupies residues 1 to 30 (MKLSCGFLLILLVLSAMIATFSEVEAMKPS). Intrachain disulfides connect C34/C42, C37/C58, C41/C51, and C46/C56. Positions 60 to 72 (GRSDLNDELEKYQ) are excised as a propeptide.

The protein belongs to the short scorpion toxin superfamily. Potassium channel inhibitor family. Epsilon-KTx 01 subfamily. In terms of tissue distribution, expressed by the venom gland.

Its subcellular location is the secreted. In terms of biological role, potassium channel blocker. At 3 uM, this toxin blocks voltage-independently voltage-gated potassium channels rKv1.2/KCNA2 (25%), hKv1.3/KCNA3 (27%), rKv4.2/KCND2 (25%), Kv10.1/KCNH1/EAG1 (15%), Kv11/hERG (12%), and Shaker-IR (10%). On hKv1.3/KCNA3, the IC(50) is 17.1 +-3.3 uM. This chain is Potassium channel toxin epsilon-KTx 1.1, found in Tityus serrulatus (Brazilian scorpion).